The chain runs to 220 residues: Large ribosomal subunit protein uL3 (220 aa).

The protein belongs to the universal ribosomal protein uL3 family. In terms of assembly, part of the 50S ribosomal subunit. Forms a cluster with proteins L14 and L19.

Its function is as follows. One of the primary rRNA binding proteins, it binds directly near the 3'-end of the 23S rRNA, where it nucleates assembly of the 50S subunit. The protein is Large ribosomal subunit protein uL3 of Staphylococcus haemolyticus (strain JCSC1435).